A 63-amino-acid polypeptide reads, in one-letter code: Large ribosomal subunit protein uL29 (63 aa).

Belongs to the universal ribosomal protein uL29 family.

This is Large ribosomal subunit protein uL29 from Pectobacterium atrosepticum (strain SCRI 1043 / ATCC BAA-672) (Erwinia carotovora subsp. atroseptica).